The following is a 159-amino-acid chain: SsrA-binding protein (159 aa).

This sequence belongs to the SmpB family.

Its subcellular location is the cytoplasm. Required for rescue of stalled ribosomes mediated by trans-translation. Binds to transfer-messenger RNA (tmRNA), required for stable association of tmRNA with ribosomes. tmRNA and SmpB together mimic tRNA shape, replacing the anticodon stem-loop with SmpB. tmRNA is encoded by the ssrA gene; the 2 termini fold to resemble tRNA(Ala) and it encodes a 'tag peptide', a short internal open reading frame. During trans-translation Ala-aminoacylated tmRNA acts like a tRNA, entering the A-site of stalled ribosomes, displacing the stalled mRNA. The ribosome then switches to translate the ORF on the tmRNA; the nascent peptide is terminated with the 'tag peptide' encoded by the tmRNA and targeted for degradation. The ribosome is freed to recommence translation, which seems to be the essential function of trans-translation. The sequence is that of SsrA-binding protein from Acidothermus cellulolyticus (strain ATCC 43068 / DSM 8971 / 11B).